Here is a 485-residue protein sequence, read N- to C-terminus: 3-isopropylmalate dehydratase large subunit (485 aa).

[4Fe-4S] cluster contacts are provided by C367, C427, and C430. Over residues 439–451 (SPGQRAASTSNRN) the composition is skewed to polar residues. Residues 439 to 462 (SPGQRAASTSNRNFEGRQGKGGRT) are disordered.

Belongs to the aconitase/IPM isomerase family. LeuC type 1 subfamily. Heterodimer of LeuC and LeuD. The cofactor is [4Fe-4S] cluster.

The enzyme catalyses (2R,3S)-3-isopropylmalate = (2S)-2-isopropylmalate. The protein operates within amino-acid biosynthesis; L-leucine biosynthesis; L-leucine from 3-methyl-2-oxobutanoate: step 2/4. In terms of biological role, catalyzes the isomerization between 2-isopropylmalate and 3-isopropylmalate, via the formation of 2-isopropylmaleate. This chain is 3-isopropylmalate dehydratase large subunit, found in Actinoplanes teichomyceticus.